Consider the following 446-residue polypeptide: MSANSGVKRASKAFKTCLFCKRSHVVCDKQRPCSRCVKRDIAHLCREDDIAVPNEMPSQHESSPNDNNIQGKYANKAHTGIPSDYQNEPVNKSGSTYGEELSPKLDSSLVNDTTSLLLPQQPVFVSENVGSEFSSLNEFLSMLENPLLTQTSLSSSSASNVHLENGSQTTQSPLEYQNDNRRDEIGVARQENRSPTIMSGSSNSISKGDKQDQEKEESRILANANENSAPTPKEQFFLTAADPSTEMTPEHRLKLVINAKLEAGLLKPYNYAKGYARLQDYMDKYMNQSSKQRILKPLSTIRPAFRTIARSLKDVDLVLVEESFERMLLSYDRVFTSMSMPACLCRRTGEIYRANKEFASLVDCTVDDLRDGKLAIYELMTEESAVNFWEKYGSIAFDKGQKAVLTSCSLRTKDGIRKRPCCFSFTIRRDRYNIPICIVGNFIPLS.

The segment at residues 15–45 is a DNA-binding region (zn(2)-C6 fungal-type); the sequence is KTCLFCKRSHVVCDKQRPCSRCVKRDIAHLC. 2 disordered regions span residues 52 to 106 and 158 to 218; these read VPNE…PKLD and ASNV…KEES. 2 stretches are compositionally biased toward polar residues: residues 56–70 and 84–96; these read MPSQHESSPNDNNIQ and DYQNEPVNKSGST. At Ser102 the chain carries Phosphoserine. Residues 160-177 are compositionally biased toward polar residues; the sequence is NVHLENGSQTTQSPLEYQ. Positions 178-192 are enriched in basic and acidic residues; that stretch reads NDNRRDEIGVARQEN. Residues 193-206 show a composition bias toward polar residues; it reads RSPTIMSGSSNSIS. Residues 207–218 show a composition bias toward basic and acidic residues; it reads KGDKQDQEKEES. A Phosphothreonine modification is found at Thr231.

Phosphorylated by SNF1 in absence of glucose. The phosphorylation is required for induction of transcription of gluconeogenic genes.

The protein resides in the cytoplasm. Its subcellular location is the nucleus. Its function is as follows. Transcription factor which regulates the expression of genes for gluconeogenesis, the TCA cycle, and glucose metabolism. Involved in the cell wall remodeling process and drug resistance. The polypeptide is Regulator of drug sensitivity 2 (RDS2) (Saccharomyces cerevisiae (strain ATCC 204508 / S288c) (Baker's yeast)).